Here is a 324-residue protein sequence, read N- to C-terminus: Elongation factor P--(R)-beta-lysine ligase (324 aa).

S75 to E77 is a substrate binding site. ATP contacts are provided by residues R99 to K101 and N108. Y117 lines the substrate pocket. E243–L244 contributes to the ATP binding site. E250 is a substrate binding site. Residue G299 participates in ATP binding.

Belongs to the class-II aminoacyl-tRNA synthetase family. EpmA subfamily. Homodimer.

It carries out the reaction D-beta-lysine + L-lysyl-[protein] + ATP = N(6)-((3R)-3,6-diaminohexanoyl)-L-lysyl-[protein] + AMP + diphosphate + H(+). Its function is as follows. With EpmB is involved in the beta-lysylation step of the post-translational modification of translation elongation factor P (EF-P). Catalyzes the ATP-dependent activation of (R)-beta-lysine produced by EpmB, forming a lysyl-adenylate, from which the beta-lysyl moiety is then transferred to the epsilon-amino group of a conserved specific lysine residue in EF-P. The protein is Elongation factor P--(R)-beta-lysine ligase of Buchnera aphidicola subsp. Acyrthosiphon pisum (strain APS) (Acyrthosiphon pisum symbiotic bacterium).